A 113-amino-acid polypeptide reads, in one-letter code: C-X-C motif chemokine 6 (113 aa).

The signal sequence occupies residues M1–A36. Intrachain disulfides connect C48/C74 and C50/C90.

It belongs to the intercrine alpha (chemokine CxC) family.

It localises to the secreted. Functionally, chemotactic for neutrophil granulocytes. Signals through binding and activation of its receptors (CXCR1 and CXCR2). In addition to its chemotactic and angiogenic properties, it has strong antibacterial activity against Gram-positive and Gram-negative bacteria (90-fold-higher when compared to CXCL5 and CXCL7). The sequence is that of C-X-C motif chemokine 6 (CXCL6) from Equus caballus (Horse).